We begin with the raw amino-acid sequence, 58 residues long: Small ribosomal subunit protein bS21 (58 aa).

Belongs to the bacterial ribosomal protein bS21 family.

This chain is Small ribosomal subunit protein bS21, found in Lactobacillus acidophilus (strain ATCC 700396 / NCK56 / N2 / NCFM).